The primary structure comprises 143 residues: Nucleoside diphosphate kinase (143 aa).

ATP is bound by residues Lys11, Phe59, Arg87, Thr93, Arg104, and Asn114. His117 functions as the Pros-phosphohistidine intermediate in the catalytic mechanism.

Belongs to the NDK family. Homotetramer. Mg(2+) serves as cofactor.

The protein resides in the cytoplasm. The catalysed reaction is a 2'-deoxyribonucleoside 5'-diphosphate + ATP = a 2'-deoxyribonucleoside 5'-triphosphate + ADP. It catalyses the reaction a ribonucleoside 5'-diphosphate + ATP = a ribonucleoside 5'-triphosphate + ADP. Its function is as follows. Major role in the synthesis of nucleoside triphosphates other than ATP. The ATP gamma phosphate is transferred to the NDP beta phosphate via a ping-pong mechanism, using a phosphorylated active-site intermediate. This is Nucleoside diphosphate kinase from Shewanella frigidimarina (strain NCIMB 400).